The following is a 503-amino-acid chain: Probable dolichyl pyrophosphate Man9GlcNAc2 alpha-1,3-glucosyltransferase (503 aa).

Topologically, residues 1 to 46 (MKERIKDKAWRPQFIKLNNPDTSKKIVSQKSKKPEIVDLSSPGNND) are cytoplasmic. A helical transmembrane segment spans residues 47–67 (LVTISILCVLLCFQLAISLNP). The Lumenal portion of the chain corresponds to 68 to 151 (HSGESQPPMY…SRGYESIAHK (84 aa)). Residues 152 to 172 (LFMRLSAIIPFYIFYLPPLIF) traverse the membrane as a helical segment. The Cytoplasmic segment spans residues 173-181 (YFTRSKKMS). The helical transmembrane segment at 182–202 (PILYALALLYPSLLVIDNGHF) threads the bilayer. The Lumenal portion of the chain corresponds to 203 to 211 (QYNSISLGL). A helical membrane pass occupies residues 212 to 232 (FLATYMFLTKNFTIIGSILFV). Residues 233-239 (AALNYKQ) are Cytoplasmic-facing. A helical membrane pass occupies residues 240–257 (MELYHALPVFVFILARSI). At 258-268 (NKTQLFNSFRR) the chain is on the lumenal side. A helical membrane pass occupies residues 269 to 289 (ILTIGLFVVGTFLIIWLPFLL). Over 290–332 (TGTAKDVIIRVFPFNRGLYEDKVASFWCAFSFILKRLPLQSVQ) the chain is Cytoplasmic. The helical transmembrane segment at 333–353 (IYISTALVLAGSAPSLLVLFL) threads the bilayer. Topologically, residues 354-359 (RPTEKQ) are lumenal. Residues 360–379 (FRISLTATGLSFFLFSFHVH) traverse the membrane as a helical segment. Residues 380 to 382 (EKT) lie on the Cytoplasmic side of the membrane. The helical transmembrane segment at 383–403 (ILLAAVPALLLISEYTSLVIW) threads the bilayer. Topologically, residues 404–420 (FLNITNISIFSLCVKDN) are lumenal. A helical transmembrane segment spans residues 421 to 441 (FALSLSFFFAYFVVSYAYTAP). The Cytoplasmic portion of the chain corresponds to 442–443 (RK). The chain crosses the membrane as a helical span at residues 444 to 464 (ISHILTILIGFAICILELYGP). Over 465 to 474 (SNQRFPHIYQ) the chain is Lumenal. A helical transmembrane segment spans residues 475–495 (LANAFFSCVHFIYFLLYLSFA). Topologically, residues 496 to 503 (SFEKTKKE) are cytoplasmic.

The protein belongs to the ALG6/ALG8 glucosyltransferase family.

The protein resides in the endoplasmic reticulum membrane. It catalyses the reaction an alpha-D-Man-(1-&gt;2)-alpha-D-Man-(1-&gt;2)-alpha-D-Man-(1-&gt;3)-[alpha-D-Man-(1-&gt;2)-alpha-D-Man-(1-&gt;3)-[alpha-D-Man-(1-&gt;2)-alpha-D-Man-(1-&gt;6)]-alpha-D-Man-(1-&gt;6)]-beta-D-Man-(1-&gt;4)-beta-D-GlcNAc-(1-&gt;4)-alpha-D-GlcNAc-diphospho-di-trans,poly-cis-dolichol + a di-trans,poly-cis-dolichyl beta-D-glucosyl phosphate = an alpha-D-Glc-(1-&gt;3)-alpha-D-Man-(1-&gt;2)-alpha-D-Man-(1-&gt;2)-alpha-D-Man-(1-&gt;3)-[alpha-D-Man-(1-&gt;2)-alpha-D-Man-(1-&gt;3)-[alpha-D-Man-(1-&gt;2)-alpha-D-Man-(1-&gt;6)]-alpha-D-Man-(1-&gt;6)]-beta-D-Man-(1-&gt;4)-beta-D-GlcNAc-(1-&gt;4)-alpha-D-GlcNAc-diphospho-di-trans,poly-cis-dolichol + a di-trans,poly-cis-dolichyl phosphate + H(+). It functions in the pathway protein modification; protein glycosylation. Adds the first glucose residue to the lipid-linked oligosaccharide precursor for N-linked glycosylation. Transfers glucose from dolichyl phosphate glucose (Dol-P-Glc) onto the lipid-linked oligosaccharide Man(9)GlcNAc(2)-PP-Dol. This chain is Probable dolichyl pyrophosphate Man9GlcNAc2 alpha-1,3-glucosyltransferase, found in Caenorhabditis elegans.